Reading from the N-terminus, the 133-residue chain is Small ribosomal subunit protein uS8 (133 aa).

It belongs to the universal ribosomal protein uS8 family. In terms of assembly, part of the 30S ribosomal subunit. Contacts proteins S5 and S12.

Functionally, one of the primary rRNA binding proteins, it binds directly to 16S rRNA central domain where it helps coordinate assembly of the platform of the 30S subunit. The sequence is that of Small ribosomal subunit protein uS8 from Chlamydia caviae (strain ATCC VR-813 / DSM 19441 / 03DC25 / GPIC) (Chlamydophila caviae).